A 71-amino-acid polypeptide reads, in one-letter code: uncharacterized protein (71 aa).

A helical membrane pass occupies residues 37 to 57 (IGVGVSDGVSAGVGVGVAMII).

It is found in the membrane. This is an uncharacterized protein from Dictyostelium discoideum (Social amoeba).